Reading from the N-terminus, the 395-residue chain is Argininosuccinate synthase (395 aa).

Residue 7 to 15 (LYSGGLDTS) participates in ATP binding. An L-citrulline-binding site is contributed by tyrosine 83. Position 113 (glycine 113) interacts with ATP. L-aspartate contacts are provided by threonine 115, asparagine 119, and aspartate 120. Asparagine 119 provides a ligand contact to L-citrulline. Residues arginine 123, serine 169, serine 178, glutamate 253, and tyrosine 265 each coordinate L-citrulline.

Belongs to the argininosuccinate synthase family. Type 1 subfamily. As to quaternary structure, homotetramer.

It is found in the cytoplasm. The catalysed reaction is L-citrulline + L-aspartate + ATP = 2-(N(omega)-L-arginino)succinate + AMP + diphosphate + H(+). It participates in amino-acid biosynthesis; L-arginine biosynthesis; L-arginine from L-ornithine and carbamoyl phosphate: step 2/3. The sequence is that of Argininosuccinate synthase from Picrophilus torridus (strain ATCC 700027 / DSM 9790 / JCM 10055 / NBRC 100828 / KAW 2/3).